The primary structure comprises 226 residues: ATP synthase subunit C lysine N-methyltransferase (226 aa).

Residues 35-55 traverse the membrane as a helical segment; it reads VIGGTLVALYAVATPFVAPAL. A required for mitochondrial location region spans residues 48–82; sequence TPFVAPALRKLCLPYVPATTTQVKNVLKMLRSRTG.

Belongs to the ANT/ATPSC lysine N-methyltransferase family.

Its subcellular location is the mitochondrion membrane. In terms of biological role, mitochondrial protein-lysine N-methyltransferase that promotes chronic pain. Involved in persistent inflammatory and neuropathic pain: methyltransferase activity in the mitochondria of sensory neurons promotes chronic pain via a pathway that depends on the production of reactive oxygen species (ROS) and on the engagement of spinal cord microglia. Protein-lysine N-methyltransferase activity is dependent on S-adenosyl-L-methionine. The protein is ATP synthase subunit C lysine N-methyltransferase (atpsckmt) of Xenopus laevis (African clawed frog).